Here is an 85-residue protein sequence, read N- to C-terminus: Large ribosomal subunit protein bL27 (85 aa).

Residues 1 to 21 are disordered; it reads MAHKKGVGSSRNGRDSDGQRL.

This sequence belongs to the bacterial ribosomal protein bL27 family.

The protein is Large ribosomal subunit protein bL27 of Geobacter sp. (strain M21).